The chain runs to 190 residues: Threonylcarbamoyl-AMP synthase (190 aa).

A YrdC-like domain is found at 7–190; the sequence is SEAVAHAVAV…ALTGELFRQG (184 aa).

The protein belongs to the SUA5 family. TsaC subfamily.

The protein resides in the cytoplasm. The enzyme catalyses L-threonine + hydrogencarbonate + ATP = L-threonylcarbamoyladenylate + diphosphate + H2O. Functionally, required for the formation of a threonylcarbamoyl group on adenosine at position 37 (t(6)A37) in tRNAs that read codons beginning with adenine. Catalyzes the conversion of L-threonine, HCO(3)(-)/CO(2) and ATP to give threonylcarbamoyl-AMP (TC-AMP) as the acyladenylate intermediate, with the release of diphosphate. In Klebsiella pneumoniae subsp. pneumoniae (strain ATCC 700721 / MGH 78578), this protein is Threonylcarbamoyl-AMP synthase.